The primary structure comprises 412 residues: Putative competence-damage inducible protein (412 aa).

It belongs to the CinA family.

The chain is Putative competence-damage inducible protein from Bacillus cytotoxicus (strain DSM 22905 / CIP 110041 / 391-98 / NVH 391-98).